The primary structure comprises 159 residues: Transcription elongation factor GreA (159 aa).

The stretch at 47 to 77 (SENAEYDAARDKQATIENEITEIQHILDNYE) forms a coiled coil.

Belongs to the GreA/GreB family.

In terms of biological role, necessary for efficient RNA polymerase transcription elongation past template-encoded arresting sites. The arresting sites in DNA have the property of trapping a certain fraction of elongating RNA polymerases that pass through, resulting in locked ternary complexes. Cleavage of the nascent transcript by cleavage factors such as GreA or GreB allows the resumption of elongation from the new 3'terminus. GreA releases sequences of 2 to 3 nucleotides. The polypeptide is Transcription elongation factor GreA (Metamycoplasma arthritidis (strain 158L3-1) (Mycoplasma arthritidis)).